The primary structure comprises 159 residues: MGLFNISLLLTCLMVLAIFHSCEAQNSPQDYLAVHNDARAQVGVGPMSWDANLASRAQNYANSRAGDCNLIHSGAGENLAKGGGDFTGRAAVQLWVSERPDYNYATNQCVGGKMCGHYTQVVWRNSVRLGCGRARCNNGWWFISCNYDPVGNWVGERPY.

The N-terminal stretch at 1 to 24 (MGLFNISLLLTCLMVLAIFHSCEA) is a signal peptide. Position 25 is a pyrrolidone carboxylic acid (glutamine 25). Residues 32–147 (LAVHNDARAQ…NGWWFISCNY (116 aa)) enclose the SCP domain. 3 cysteine pairs are disulfide-bonded: cysteine 68–cysteine 136, cysteine 109–cysteine 115, and cysteine 131–cysteine 145.

It belongs to the CRISP family.

Probably involved in the defense reaction of plants against pathogens. In Solanum lycopersicum (Tomato), this protein is Pathogenesis-related leaf protein 4.